A 412-amino-acid chain; its full sequence is Multifunctional CCA protein (412 aa).

Gly8 and Arg11 together coordinate ATP. Residues Gly8 and Arg11 each contribute to the CTP site. Mg(2+)-binding residues include Asp21 and Asp23. Arg91, Arg137, and Arg140 together coordinate ATP. Residues Arg91, Arg137, and Arg140 each coordinate CTP. Positions 225–326 constitute an HD domain; the sequence is TGIHVMMVID…ADMLQATDAY (102 aa).

This sequence belongs to the tRNA nucleotidyltransferase/poly(A) polymerase family. Bacterial CCA-adding enzyme type 1 subfamily. As to quaternary structure, monomer. Can also form homodimers and oligomers. Mg(2+) serves as cofactor. Ni(2+) is required as a cofactor.

It catalyses the reaction a tRNA precursor + 2 CTP + ATP = a tRNA with a 3' CCA end + 3 diphosphate. The catalysed reaction is a tRNA with a 3' CCA end + 2 CTP + ATP = a tRNA with a 3' CCACCA end + 3 diphosphate. Its function is as follows. Catalyzes the addition and repair of the essential 3'-terminal CCA sequence in tRNAs without using a nucleic acid template. Adds these three nucleotides in the order of C, C, and A to the tRNA nucleotide-73, using CTP and ATP as substrates and producing inorganic pyrophosphate. tRNA 3'-terminal CCA addition is required both for tRNA processing and repair. Also involved in tRNA surveillance by mediating tandem CCA addition to generate a CCACCA at the 3' terminus of unstable tRNAs. While stable tRNAs receive only 3'-terminal CCA, unstable tRNAs are marked with CCACCA and rapidly degraded. This is Multifunctional CCA protein from Nitrosomonas europaea (strain ATCC 19718 / CIP 103999 / KCTC 2705 / NBRC 14298).